We begin with the raw amino-acid sequence, 251 residues long: Ubiquinone/menaquinone biosynthesis C-methyltransferase UbiE (251 aa).

S-adenosyl-L-methionine is bound by residues T74, D95, 123-124 (NA), and S140.

It belongs to the class I-like SAM-binding methyltransferase superfamily. MenG/UbiE family.

The catalysed reaction is a 2-demethylmenaquinol + S-adenosyl-L-methionine = a menaquinol + S-adenosyl-L-homocysteine + H(+). The enzyme catalyses a 2-methoxy-6-(all-trans-polyprenyl)benzene-1,4-diol + S-adenosyl-L-methionine = a 5-methoxy-2-methyl-3-(all-trans-polyprenyl)benzene-1,4-diol + S-adenosyl-L-homocysteine + H(+). It functions in the pathway quinol/quinone metabolism; menaquinone biosynthesis; menaquinol from 1,4-dihydroxy-2-naphthoate: step 2/2. It participates in cofactor biosynthesis; ubiquinone biosynthesis. Methyltransferase required for the conversion of demethylmenaquinol (DMKH2) to menaquinol (MKH2) and the conversion of 2-polyprenyl-6-methoxy-1,4-benzoquinol (DDMQH2) to 2-polyprenyl-3-methyl-6-methoxy-1,4-benzoquinol (DMQH2). The protein is Ubiquinone/menaquinone biosynthesis C-methyltransferase UbiE of Klebsiella pneumoniae (strain 342).